A 459-amino-acid polypeptide reads, in one-letter code: Carbonic anhydrase 9 (459 aa).

A signal peptide spans 1–37 (MAPLCPSPWLPLLIPAPAPGLTVQLLLSLLLLVPVHP). The tract at residues 38-112 (QRLPRMQEDS…EEEGSLKLED (75 aa)) is proteoglycan-like (PG). The Extracellular portion of the chain corresponds to 38 to 414 (QRLPRMQEDS…QLNSCLAAGD (377 aa)). The tract at residues 42–154 (RMQEDSPLGG…GDPPWPRVSP (113 aa)) is disordered. Over residues 55–95 (GEDDPLGEEDLPSEEDSPREEDPPGEEDLPGEEDLPGEEDL) the composition is skewed to acidic residues. Residues 96–112 (PEVKPKSEEEGSLKLED) show a composition bias toward basic and acidic residues. Residue Thr-115 is glycosylated (O-linked (GlcNAc...) threonine). Basic and acidic residues predominate over residues 129-140 (AHRDKEGDDQSH). Residues 138–391 (QSHWRYGGDP…NGRVIEASFP (254 aa)) are catalytic. Positions 139 to 390 (SHWRYGGDPP…LNGRVIEASF (252 aa)) constitute an Alpha-carbonic anhydrase domain. Cys-156 and Cys-336 are disulfide-bonded. His-200 functions as the Proton donor/acceptor in the catalytic mechanism. Residues His-226, His-228, and His-251 each contribute to the Zn(2+) site. Residue 332-333 (TT) participates in substrate binding. N-linked (GlcNAc...) asparagine glycosylation is present at Asn-346. The chain crosses the membrane as a helical span at residues 415 to 435 (ILALVFGLLFAVTSVAFLVQM). Topologically, residues 436 to 459 (RRQHRRGTKGGVSYRPAEVAETGA) are cytoplasmic. Phosphotyrosine is present on Tyr-449.

This sequence belongs to the alpha-carbonic anhydrase family. Forms oligomers linked by disulfide bonds. Requires Zn(2+) as cofactor. Asn-346 bears high-mannose type glycan structures. Expressed primarily in carcinoma cells lines. Expression is restricted to very few normal tissues and the most abundant expression is found in the epithelial cells of gastric mucosa.

The protein localises to the nucleus. The protein resides in the nucleolus. It is found in the cell membrane. Its subcellular location is the cell projection. It localises to the microvillus membrane. It carries out the reaction hydrogencarbonate + H(+) = CO2 + H2O. Its activity is regulated as follows. Inhibited by coumarins, saccharin, sulfonamide derivatives such as acetazolamide (AZA) and Foscarnet (phosphonoformate trisodium salt). Its function is as follows. Catalyzes the interconversion between carbon dioxide and water and the dissociated ions of carbonic acid (i.e. bicarbonate and hydrogen ions). This Homo sapiens (Human) protein is Carbonic anhydrase 9 (CA9).